The sequence spans 605 residues: Probable potassium transport system protein Kup (605 aa).

12 helical membrane-spanning segments follow: residues 17 to 37, 45 to 65, 96 to 116, 140 to 160, 165 to 185, 211 to 231, 246 to 266, 286 to 306, 338 to 358, 367 to 387, 394 to 414, and 417 to 437; these read GLVF…IFAL, VFGI…VEYA, IAFV…DGVI, LGTL…FQFK, VAAA…VSGL, GISA…GEAL, AWYF…AFAL, LYIP…QALI, IYIG…MLIF, AYGL…TIIF, WKVP…ISNL, and LPHG…TILI.

The protein belongs to the HAK/KUP transporter (TC 2.A.72) family.

It is found in the cell inner membrane. The enzyme catalyses K(+)(in) + H(+)(in) = K(+)(out) + H(+)(out). In terms of biological role, transport of potassium into the cell. Likely operates as a K(+):H(+) symporter. In Geotalea uraniireducens (strain Rf4) (Geobacter uraniireducens), this protein is Probable potassium transport system protein Kup.